A 147-amino-acid polypeptide reads, in one-letter code: UPF0178 protein VP2328 (147 aa).

This sequence belongs to the UPF0178 family.

In Vibrio parahaemolyticus serotype O3:K6 (strain RIMD 2210633), this protein is UPF0178 protein VP2328.